Reading from the N-terminus, the 211-residue chain is Regulator of G-protein signaling 2 (211 aa).

Disordered stretches follow at residues 14 to 33 and 49 to 68; these read RPMD…REKM and LQNS…KQQA. Positions 32-66 are necessary for membrane association; it reads KMKRTLLKDWKTRLSYFLQNSSTPGKPKTGKKSKQ. Residues 79–116 are necessary to inhibit protein synthesis; the sequence is LWSEAFDELLASKYGLAAFRAFLKSEFCEENIEFWLAC. The 117-residue stretch at 83-199 folds into the RGS domain; that stretch reads AFDELLASKY…LESEFYQDLC (117 aa).

Interacts with GNAQ. Does not interact with GNAI1 and GNAI3. Interacts with EIF2B5. Interacts with PRKG1 (isoform alpha). In terms of processing, phosphorylated by protein kinase C. Phosphorylation by PRKG1 leads to activation of RGS2 activity. As to expression, expressed in acute myelogenous leukemia (AML) and in acute lymphoblastic leukemia (ALL).

Its subcellular location is the cell membrane. The protein localises to the cytoplasm. It localises to the nucleus. The protein resides in the nucleolus. It is found in the mitochondrion. Functionally, regulates G protein-coupled receptor signaling cascades. Inhibits signal transduction by increasing the GTPase activity of G protein alpha subunits, thereby driving them into their inactive GDP-bound form. It is involved in the negative regulation of the angiotensin-activated signaling pathway. Plays a role in the regulation of blood pressure in response to signaling via G protein-coupled receptors and GNAQ. Plays a role in regulating the constriction and relaxation of vascular smooth muscle. Binds EIF2B5 and blocks its activity, thereby inhibiting the translation of mRNA into protein. This is Regulator of G-protein signaling 2 (RGS2) from Homo sapiens (Human).